Reading from the N-terminus, the 442-residue chain is MTPPENRPSLPEVHRSIRVPNSNSFWRKMLAYAGPGYLVSVGYIDPGNWATDIAGGSKFGYTLLTVILLSNLMAILLQSLCVRLGVATGRDLAQACRDYFSPKVSFCLWVLCEIAIAACDLAELLGSAIALQLLFVIPLIWGVCITALDVLVLLFLQHKGFRYTEALVIMLVATVGICFTAEILFSRPDMGGILLGYLPKKEILQNPEMLYIAIGILGATVMPHNLYLHSSIVQTRDWQPTTEKRWEAIKFGTIDSTFALSLALFINSAILIVSAATFHFSGNQNVAEIQDAYKLLSPLLGVSAASAIFGIALLASGQSSTLTATLAGQIVMEGFLQFRLPSWLRRLITRLLAIIPALITIILFGENSTSSLIVLSQVILSLQLPFAVIPLVMFTSNRRLMGEFVNPLWLKSLAWLVAIVIVGLNAWLLLQSLWGWLLQVPS.

11 consecutive transmembrane segments (helical) span residues 29-49, 62-82, 106-126, 135-155, 166-186, 209-229, 258-278, 295-315, 347-367, 372-392, and 413-433; these read MLAY…PGNW, TLLT…SLCV, FCLW…ELLG, FVIP…VLLF, ALVI…ILFS, MLYI…LYLH, FALS…AATF, LLSP…ALLA, LITR…FGEN, LIVL…IPLV, and LAWL…LQSL.

This sequence belongs to the NRAMP family.

The protein localises to the cell inner membrane. H(+)-stimulated, divalent metal cation uptake system. The protein is Divalent metal cation transporter MntH of Nostoc sp. (strain PCC 7120 / SAG 25.82 / UTEX 2576).